The chain runs to 148 residues: Large ribosomal subunit protein uL11 (148 aa).

The tract at residues 89 to 108 (EKKKGSGAHKPGKEKVGQVT) is disordered.

This sequence belongs to the universal ribosomal protein uL11 family. Part of the ribosomal stalk of the 50S ribosomal subunit. Interacts with L10 and the large rRNA to form the base of the stalk. L10 forms an elongated spine to which L12 dimers bind in a sequential fashion forming a multimeric L10(L12)X complex. One or more lysine residues are methylated.

In terms of biological role, forms part of the ribosomal stalk which helps the ribosome interact with GTP-bound translation factors. This is Large ribosomal subunit protein uL11 from Anaeromyxobacter dehalogenans (strain 2CP-1 / ATCC BAA-258).